The sequence spans 141 residues: uncharacterized protein (141 aa).

4 helical membrane passes run 7-27, 47-67, 75-95, and 106-126; these read VAIM…AASL, SAVG…MLGV, AVLC…ILMF, and VIFV…WFVA.

It is found in the cell membrane. This is an uncharacterized protein from Bacillus subtilis (strain 168).